Reading from the N-terminus, the 142-residue chain is Small ribosomal subunit protein bS16 (142 aa).

A disordered region spans residues 101-142 (RPSFDALGGDDAGKGEAITQKKKAEKKDEAAAESSSSESTEA). Low complexity predominate over residues 132–142 (AESSSSESTEA).

This sequence belongs to the bacterial ribosomal protein bS16 family.

This chain is Small ribosomal subunit protein bS16, found in Streptomyces avermitilis (strain ATCC 31267 / DSM 46492 / JCM 5070 / NBRC 14893 / NCIMB 12804 / NRRL 8165 / MA-4680).